Here is a 289-residue protein sequence, read N- to C-terminus: 3-methyl-2-oxobutanoate hydroxymethyltransferase (289 aa).

Residues 1–15 (MSTTFQLDTSTSRAN) are compositionally biased toward polar residues. Residues 1 to 20 (MSTTFQLDTSTSRANPTPAP) form a disordered region. Mg(2+) contacts are provided by D67 and D106. 3-methyl-2-oxobutanoate is bound by residues 67–68 (DS), D106, and K136. Position 138 (E138) interacts with Mg(2+). The Proton acceptor role is filled by E205.

It belongs to the PanB family. Homodecamer; pentamer of dimers. The cofactor is Mg(2+).

The protein resides in the cytoplasm. The enzyme catalyses 3-methyl-2-oxobutanoate + (6R)-5,10-methylene-5,6,7,8-tetrahydrofolate + H2O = 2-dehydropantoate + (6S)-5,6,7,8-tetrahydrofolate. Its pathway is cofactor biosynthesis; (R)-pantothenate biosynthesis; (R)-pantoate from 3-methyl-2-oxobutanoate: step 1/2. Its function is as follows. Catalyzes the reversible reaction in which hydroxymethyl group from 5,10-methylenetetrahydrofolate is transferred onto alpha-ketoisovalerate to form ketopantoate. The chain is 3-methyl-2-oxobutanoate hydroxymethyltransferase from Novosphingobium aromaticivorans (strain ATCC 700278 / DSM 12444 / CCUG 56034 / CIP 105152 / NBRC 16084 / F199).